A 316-amino-acid chain; its full sequence is Melanocyte-stimulating hormone receptor (316 aa).

The Extracellular segment spans residues Met1–Glu37. Asn29 carries an N-linked (GlcNAc...) asparagine glycan. A helical membrane pass occupies residues Val38–Ile63. At Ala64–Ser72 the chain is on the cytoplasmic side. Residues Met73–Leu93 traverse the membrane as a helical segment. Residues Glu94 to Asn118 lie on the Extracellular side of the membrane. The helical transmembrane segment at Thr119–Val140 threads the bilayer. Residues Asp141–Arg163 lie on the Cytoplasmic side of the membrane. A helical membrane pass occupies residues Ala164–Tyr183. The Extracellular segment spans residues Asp184–Cys191. Residues Leu192 to Leu211 form a helical membrane-spanning segment. Over Ala212 to Ala240 the chain is Cytoplasmic. A helical transmembrane segment spans residues Ala241 to Phe266. Residues Cys267–Asn279 are Extracellular-facing. Residues Phe280–Phe300 form a helical membrane-spanning segment. Topologically, residues Arg301–Trp316 are cytoplasmic. Cys314 carries S-palmitoyl cysteine lipidation.

This sequence belongs to the G-protein coupled receptor 1 family. In terms of assembly, interacts with MGRN1, but does not undergo MGRN1-mediated ubiquitination; this interaction competes with GNAS-binding and thus inhibits agonist-induced cAMP production. Interacts with OPN3; the interaction results in a decrease in MC1R-mediated cAMP signaling and ultimately a decrease in melanin production in melanocytes.

The protein resides in the cell membrane. In terms of biological role, receptor for MSH (alpha, beta and gamma) and ACTH. The activity of this receptor is mediated by G proteins which activate adenylate cyclase. Mediates melanogenesis, the production of eumelanin (black/brown) and phaeomelanin (red/yellow), via regulation of cAMP signaling in melanocytes. The protein is Melanocyte-stimulating hormone receptor (MC1R) of Saguinus geoffroyi (Geoffroy's tamarin).